The following is a 522-amino-acid chain: Ribose import ATP-binding protein RbsA 1 (522 aa).

ABC transporter domains lie at 8–243 (LRIE…GRSI) and 249–496 (RERP…VSTN). 40–47 (GENGAGKS) provides a ligand contact to ATP. The disordered stretch occupies residues 492–522 (AVSTNQYKPDKSDKPDASAGKTDQKEAPRGH). The span at 499–522 (KPDKSDKPDASAGKTDQKEAPRGH) shows a compositional bias: basic and acidic residues.

The protein belongs to the ABC transporter superfamily. Ribose importer (TC 3.A.1.2.1) family. The complex is composed of an ATP-binding protein (RbsA), two transmembrane proteins (RbsC) and a solute-binding protein (RbsB).

The protein localises to the cell membrane. The catalysed reaction is D-ribose(out) + ATP + H2O = D-ribose(in) + ADP + phosphate + H(+). In terms of biological role, part of the ABC transporter complex RbsABC involved in ribose import. Responsible for energy coupling to the transport system. The polypeptide is Ribose import ATP-binding protein RbsA 1 (Streptomyces avermitilis (strain ATCC 31267 / DSM 46492 / JCM 5070 / NBRC 14893 / NCIMB 12804 / NRRL 8165 / MA-4680)).